We begin with the raw amino-acid sequence, 122 residues long: Large ribosomal subunit protein uL18 (122 aa).

It belongs to the universal ribosomal protein uL18 family. Part of the 50S ribosomal subunit; part of the 5S rRNA/L5/L18/L25 subcomplex. Contacts the 5S and 23S rRNAs.

In terms of biological role, this is one of the proteins that bind and probably mediate the attachment of the 5S RNA into the large ribosomal subunit, where it forms part of the central protuberance. The chain is Large ribosomal subunit protein uL18 from Mycobacterium tuberculosis (strain ATCC 25177 / H37Ra).